The chain runs to 846 residues: Homeodomain-interacting protein kinase 1 (846 aa).

The tract at residues 47–74 is disordered; that stretch reads NPFSIQKAPGTSSDNEQRAPKRRADEEA. Residues 61-72 are compositionally biased toward basic and acidic residues; it reads NEQRAPKRRADE. The Protein kinase domain maps to 147 to 483; that stretch reads YEVLEFLGKG…PAEGLESKFV (337 aa). ATP contacts are provided by residues 153 to 161 and Lys176; that span reads LGKGTFGQV. Asp272 acts as the Proton acceptor in catalysis. Positions 741–790 are disordered; the sequence is LAAQPKKNSPAPSVITLSSDEDSNGAGSSNSGSTTRTGAVNPVRNDTLPM. Positions 746–757 are enriched in polar residues; it reads KKNSPAPSVITL. A compositionally biased stretch (low complexity) spans 764-773; the sequence is NGAGSSNSGS.

Belongs to the protein kinase superfamily. CMGC Ser/Thr protein kinase family. HIPK subfamily. Broadly expressed during embryogenesis. Expression becomes more restricted during larval development. L3 larvae display robust expression in many head and motor neurons, and lower levels of expression in the intestine and the seam cells of the hypodermis. By late L4 stage, expression is largely restricted to neurons and is maintained in nerve cells of the head and nerve cord during adulthood. Expressed in adult pharyngeal cells, hypodermal cells, gonadal sheath cells and distal tip cells but not in germline cells. Expressed in serotonergic neurons such as ADF and NSM and in GABAergic neurons, including RME, RIS and DVB.

Its subcellular location is the nucleus. The catalysed reaction is L-seryl-[protein] + ATP = O-phospho-L-seryl-[protein] + ADP + H(+). It carries out the reaction L-threonyl-[protein] + ATP = O-phospho-L-threonyl-[protein] + ADP + H(+). Serine/threonine-protein kinase required in the somatic gonadal cells to regulate germline proliferation during larval development and in adulthood. Plays a role in the development/differentiation of gonadal distal tip cells. Required for normal lifespan in a pha-4 and mxl-2-dependent manner. Also contributes to survival following heat or oxidative stress. Prevents sumoylation and inactivation of heat shock transcription factor hsf-1 which enhances hsf-1-dependent transcriptional induction of chaperones in response to heat shock. Also required for hormetic extension of longevity in response to heat stress. Also contributes to longevity by promoting autophagy under nutrient stress conditions through induction of autophagosome formation and autophagy gene expression. Provides protection against proteotoxic polyglutamine aggregate and the associated locomotory toxicity, probably as a result of kinase activity. Contributes to longevity via gamma-aminobutyric acid (GABA)ergic signaling by promoting autophagy through mxl-2, hlh-30 and daf-16 but independent of hsf-1 and phas-4, to induce autophagosome formation and the expression of autophagy genes. Promotes thermotolerance via serotonergic signaling by serotonergic neurons. Preserves neuronal function in aging animals by mitigating against age-associated decline in axonal and synaptic transmissions. Acts as an activator of nhr-49-dependent hypoxia response, including the up-regulation of fmo-2 and acs-2, the induction of autophagosome formation and expression of autophagy genes. This chain is Homeodomain-interacting protein kinase 1, found in Caenorhabditis elegans.